Consider the following 490-residue polypeptide: GTPase Der (490 aa).

EngA-type G domains follow at residues Pro-3–Leu-166 and Ile-203–Thr-376. Residues Gly-9–Ser-16, Asp-56–Ile-60, Asn-118–Asp-121, Gly-209–Ser-216, Asp-256–Val-260, and Asn-321–Asp-324 contribute to the GTP site. The KH-like domain occupies Arg-377–Glu-461.

The protein belongs to the TRAFAC class TrmE-Era-EngA-EngB-Septin-like GTPase superfamily. EngA (Der) GTPase family. As to quaternary structure, associates with the 50S ribosomal subunit.

Functionally, GTPase that plays an essential role in the late steps of ribosome biogenesis. This chain is GTPase Der, found in Escherichia coli O17:K52:H18 (strain UMN026 / ExPEC).